Here is a 543-residue protein sequence, read N- to C-terminus: Hydroxylamine reductase (543 aa).

4 residues coordinate [4Fe-4S] cluster: C5, C8, C17, and C23. Positions 236, 260, 304, 398, 426, 451, 486, and 488 each coordinate hybrid [4Fe-2O-2S] cluster. C398 is subject to Cysteine persulfide.

This sequence belongs to the HCP family. The cofactor is [4Fe-4S] cluster. Hybrid [4Fe-2O-2S] cluster serves as cofactor.

It is found in the cytoplasm. The enzyme catalyses A + NH4(+) + H2O = hydroxylamine + AH2 + H(+). In terms of biological role, catalyzes the reduction of hydroxylamine to form NH(3) and H(2)O. The polypeptide is Hydroxylamine reductase (Bacteroides fragilis (strain ATCC 25285 / DSM 2151 / CCUG 4856 / JCM 11019 / LMG 10263 / NCTC 9343 / Onslow / VPI 2553 / EN-2)).